A 254-amino-acid chain; its full sequence is Glucosamine-6-phosphate deaminase (254 aa).

The active-site Proton acceptor; for enolization step is aspartate 65. Asparagine 134 acts as the For ring-opening step in catalysis. Histidine 136 serves as the catalytic Proton acceptor; for ring-opening step. Glutamate 141 acts as the For ring-opening step in catalysis.

It belongs to the glucosamine/galactosamine-6-phosphate isomerase family. NagB subfamily.

The enzyme catalyses alpha-D-glucosamine 6-phosphate + H2O = beta-D-fructose 6-phosphate + NH4(+). It participates in amino-sugar metabolism; N-acetylneuraminate degradation; D-fructose 6-phosphate from N-acetylneuraminate: step 5/5. In terms of biological role, catalyzes the reversible isomerization-deamination of glucosamine 6-phosphate (GlcN6P) to form fructose 6-phosphate (Fru6P) and ammonium ion. The sequence is that of Glucosamine-6-phosphate deaminase from Corynebacterium aurimucosum (strain ATCC 700975 / DSM 44827 / CIP 107346 / CN-1) (Corynebacterium nigricans).